An 89-amino-acid polypeptide reads, in one-letter code: Large ribosomal subunit protein uL30 (89 aa).

The protein belongs to the universal ribosomal protein uL30 family. In terms of assembly, part of the 50S ribosomal subunit.

The polypeptide is Large ribosomal subunit protein uL30 (Myxococcus xanthus (strain DK1622)).